A 160-amino-acid polypeptide reads, in one-letter code: Vegetative-specific protein V4 (160 aa).

3 consecutive repeat copies span residues 151-153, 154-156, and 157-159. Positions 151 to 159 are 3 X 3 AA tandem repeats of N-Q-[PG]; it reads NQPNQPNQG.

In terms of biological role, unknown. Its expression during growth is not required for growth but for the proper initiation of development, therefore playing a role in the transition from growth to development. The polypeptide is Vegetative-specific protein V4 (lmcB) (Dictyostelium discoideum (Social amoeba)).